The following is a 533-amino-acid chain: MAPPAMAFQALALGPLPLPLPAARRRRRVRVLAVAADHTPPPPPSPSSPPEPANSPSRLLRELAERKKAVSPKKKHPPRRFILKPPLDDERLTQRFLSSPQLSLKALPLLSSCLPSAPLSAADRTWMDEYLLEAKQALGYPLAPSETLGDGDDDGCPARHFDVLLYLAFQHLDTSCERTRTRHVRSGHSRLWFLGQYVLELAFCEFFLQRYPRESPGPMRERVFALIGKRAIPKWIKAASLHNLVFPYDDLDKMIRKDREPPAKAVFWALFGAIYLCFGMPEVYRVLFEAFGMDPEDESCQPKLRRQLEDVDYVSVEFEKRQLTWQDVAAYRPPPDALFAHPRLFRACVPPGMHRFRGNIWDFDNRPKVMNTLGYPLPMNDRIPEITEARNIELGLGLQLCFLHPSKHKFEHPRFCLERLEYVGQKIQDLVMAERLLMKHLDAPGRWLAEKHRRLLMNKYCGRYLRDKHLHHYIIYGESVQDRFEHNRRLRNPSTTAVQQAIHGLAYCVYGKPDVRRLMFEVFDFEQVQPKAV.

The transit peptide at 1–30 directs the protein to the chloroplast; sequence MAPPAMAFQALALGPLPLPLPAARRRRRVR. 2 disordered regions span residues 31 to 57 and 66 to 85; these read VLAV…NSPS and RKKA…ILKP. Residues 39–53 show a composition bias toward pro residues; that stretch reads TPPPPPSPSSPPEPA. The segment covering 69–82 has biased composition (basic residues); the sequence is AVSPKKKHPPRRFI. RNase III domains are found at residues 164 to 279 and 411 to 511; these read LLYL…LCFG and EHPR…CVYG.

Interacts with RNA. Part of large ribonucleo-protein particles that contain CAF1 and/or CAF2.

It is found in the plastid. The protein localises to the chloroplast. In terms of biological role, binds specific group II introns in chloroplasts and facilitates their splicing. Acts on both subgroup IIA and subgroup IIB introns. The substrates of the subgroup II also require the CRM domain proteins CAF1 or CAF2. Binds both single-stranded and double-stranded RNA non-specifically, but lacks endonuclease activity. Required for plastid ribosome biogenesis. This is Ribonuclease III domain-containing protein RNC1, chloroplastic from Oryza sativa subsp. japonica (Rice).